The chain runs to 530 residues: MRRDSDMASHIQQPGGHGNPGPAPSPSPGPGPGPGASERVALKKEIGLVSACTIIIGNIIGSGIFISPKGVLEHSGSVGLALFVWVLGGGVTALGSLCYAELGVAIPKSGGDYAYVTEIFGGLAGFLLLWSAVLIMYPTSLAVISMTFSNYVLQPVFPNCIPPATASRVLSMACLMLLTWVNSSSVRWATRIQVIFTGGKLLALSLIITVGFVQIFQGHFEELRPTNAFAFWMTPSVGHLALAFLQGSFAFSGWNFLNYVTEELVDPRKNLPRAIFISIPLVTFVYTFTNVAYFTAMSPQELLSSNAVAVTFGEKLLGYFSWVMPVSVALSTFGGINGYLFTSSRLCFSGAREGHLPSFLAMIHVRRCTPIPALLVCCGATAVIMLVGDTYTLINYVSFINYLCYGVTILGLLVLRWRRPALHRPIKVNLLVPVVYLVFWAFLLVFSFISEPMVCGVGIIIILTGVPIFFLGVFWRSKPKCVHRFTESMTRWGQELCFVVYPQGSLEEEENGPMGQPSPLPITDKPLKTQ.

The tract at residues 1–36 (MRRDSDMASHIQQPGGHGNPGPAPSPSPGPGPGPGA) is disordered. Residues 21 to 33 (GPAPSPSPGPGPG) are compositionally biased toward pro residues. A run of 10 helical transmembrane segments spans residues 46 to 66 (IGLV…GIFI), 78 to 98 (VGLA…GSLC), 119 to 139 (IFGG…MYPT), 192 to 212 (IQVI…TVGF), 274 to 294 (AIFI…VAYF), 316 to 336 (LLGY…FGGI), 368 to 388 (CTPI…MLVG), 394 to 414 (INYV…GLLV), 430 to 450 (LLVP…SFIS), and 454 to 474 (VCGV…LGVF). Positions 508–530 (EEENGPMGQPSPLPITDKPLKTQ) are disordered.

This sequence belongs to the amino acid-polyamine-organocation (APC) superfamily. As to quaternary structure, disulfide-linked heterodimer with the amino acid transport protein SLC3A2/4F2hc.

Its subcellular location is the cell membrane. The catalysed reaction is L-alanine(in) + glycine(out) = L-alanine(out) + glycine(in). It carries out the reaction L-serine(out) + L-alanine(in) = L-serine(in) + L-alanine(out). It catalyses the reaction L-threonine(out) + L-alanine(in) = L-threonine(in) + L-alanine(out). The enzyme catalyses L-cysteine(out) + L-alanine(in) = L-cysteine(in) + L-alanine(out). The catalysed reaction is 2-aminoisobutanoate(out) + L-alanine(in) = 2-aminoisobutanoate(in) + L-alanine(out). It carries out the reaction D-serine(out) + L-alanine(in) = D-serine(in) + L-alanine(out). It catalyses the reaction D-alanine(out) + L-alanine(in) = D-alanine(in) + L-alanine(out). The enzyme catalyses L-valine(out) + L-alanine(in) = L-valine(in) + L-alanine(out). The catalysed reaction is L-methionine(out) + L-alanine(in) = L-methionine(in) + L-alanine(out). It carries out the reaction beta-alanine(out) + L-alanine(in) = beta-alanine(in) + L-alanine(out). It catalyses the reaction D-cysteine(out) + L-alanine(in) = D-cysteine(in) + L-alanine(out). The enzyme catalyses D-threonine(out) + L-alanine(in) = D-threonine(in) + L-alanine(out). The catalysed reaction is D-isoleucine(out) + D-serine(in) = D-isoleucine(in) + D-serine(out). It carries out the reaction D-serine(in) = D-serine(out). Functionally, associates with SLC3A2/4F2hc to form a functional heterodimeric complex that translocates small neutral L- and D-amino acids across the plasma membrane. Preferentially mediates exchange transport, but can also operate via facilitated diffusion. Acts as a major transporter for glycine, L- and D-serine in the central nervous system. At the spinal cord and brainstem regulates glycine metabolism and glycinergic inhibitory neurotransmission by providing for glycine de novo synthesis from L-serine and glycine recycling from astrocytes to glycinergic motor neurons. At Schaffer collateral-CA1 synapses mediates D-serine and glycine release that modulates post-synaptic activation of NMDA receptors and excitatory glutamatergic transmission. May regulate D-serine release from mesenchymal progenitors located in developing subcutaneous adipose tissue, favoring white adipocyte over thermogenic beige adipocyte lineage commitment. The chain is Asc-type amino acid transporter 1 (Slc7a10) from Rattus norvegicus (Rat).